A 104-amino-acid chain; its full sequence is Protein translation factor SUI1 homolog (104 aa).

The protein belongs to the SUI1 family.

In Ignicoccus hospitalis (strain KIN4/I / DSM 18386 / JCM 14125), this protein is Protein translation factor SUI1 homolog.